The chain runs to 499 residues: Thermostable carboxypeptidase 1 (499 aa).

The region spanning 6–499 (QNETIKQILA…FVRWVKEKYL (494 aa)) is the Peptidase M32 domain. The HPF motif lies at 238 to 240 (HPF). A DXRXT motif is present at residues 248 to 252 (DVRIT). Histidine 269 lines the Co(2+) pocket. The short motif at 269–273 (HEFGH) is the HEXXH element. Glutamate 270 functions as the Proton donor/acceptor in the catalytic mechanism. The Co(2+) site is built by histidine 273 and glutamate 299. The HES/GQ motif lies at 298–301 (HESQ). Positions 350 to 355 (IRTEAD) match the I/NRXXA/SD motif. Residues 405 to 412 (GILQDIHW) carry the GXXQDXHW motif.

This sequence belongs to the peptidase M32 family. Homodimer. Requires Co(2+) as cofactor. It depends on Mn(2+) as a cofactor.

The catalysed reaction is Release of a C-terminal amino acid with broad specificity, except for -Pro.. With respect to regulation, EDTA and DTT reversibly abolish carboxypeptidase activity. In terms of biological role, broad specificity carboxypetidase that releases amino acids sequentially from the C-terminus, including neutral, aromatic, polar and basic residues, but not Pro, Gly, Asp and Glu. In Pyrococcus furiosus (strain ATCC 43587 / DSM 3638 / JCM 8422 / Vc1), this protein is Thermostable carboxypeptidase 1.